We begin with the raw amino-acid sequence, 874 residues long: Alanine--tRNA ligase (874 aa).

Positions 563, 567, 665, and 669 each coordinate Zn(2+).

It belongs to the class-II aminoacyl-tRNA synthetase family. Zn(2+) serves as cofactor.

The protein resides in the cytoplasm. It catalyses the reaction tRNA(Ala) + L-alanine + ATP = L-alanyl-tRNA(Ala) + AMP + diphosphate. Functionally, catalyzes the attachment of alanine to tRNA(Ala) in a two-step reaction: alanine is first activated by ATP to form Ala-AMP and then transferred to the acceptor end of tRNA(Ala). Also edits incorrectly charged Ser-tRNA(Ala) and Gly-tRNA(Ala) via its editing domain. This Histophilus somni (strain 2336) (Haemophilus somnus) protein is Alanine--tRNA ligase.